The sequence spans 326 residues: METTLGEIARIIKGELKGNHNIKIKGISTPENPKENTVVFCRNMEEVEKAKEKASAVVTQEEVKDFPHIKVKDVKLALAEFLEHFFPEEHPWGFLRTPASEKELEIGMGSFIGDFVVIGKNVKIGRNVKIYPFTYVGDNTVIGDNTVIFSGVHIYRNTVIGRNVRIHSGAVIGADGFGYHITQEGIKKIPHIGGVIIEDNVEIGANTTIDRALIENTLIGKNTKIDNLVMVAHNCKVGENNILVSQVGLSGSVKTGKNVILAGQVGVADHVEIGDNVIVTAKSGVANNLAPNKTYGANLPAIEWSRWKRIYVYLLRLPELFKKITT.

The active-site Proton acceptor is His233.

The protein belongs to the transferase hexapeptide repeat family. LpxD subfamily. Homotrimer.

It catalyses the reaction a UDP-3-O-[(3R)-3-hydroxyacyl]-alpha-D-glucosamine + a (3R)-hydroxyacyl-[ACP] = a UDP-2-N,3-O-bis[(3R)-3-hydroxyacyl]-alpha-D-glucosamine + holo-[ACP] + H(+). The protein operates within bacterial outer membrane biogenesis; LPS lipid A biosynthesis. Its function is as follows. Catalyzes the N-acylation of UDP-3-O-acylglucosamine using 3-hydroxyacyl-ACP as the acyl donor. Is involved in the biosynthesis of lipid A, a phosphorylated glycolipid that anchors the lipopolysaccharide to the outer membrane of the cell. This chain is UDP-3-O-acylglucosamine N-acyltransferase, found in Aquifex aeolicus (strain VF5).